A 368-amino-acid polypeptide reads, in one-letter code: Ribosomal RNA large subunit methyltransferase M (368 aa).

S-adenosyl-L-methionine-binding positions include S189, 222 to 225 (CPGG), D241, D261, and D278. K307 serves as the catalytic Proton acceptor.

This sequence belongs to the class I-like SAM-binding methyltransferase superfamily. RNA methyltransferase RlmE family. RlmM subfamily. As to quaternary structure, monomer.

The protein resides in the cytoplasm. It catalyses the reaction cytidine(2498) in 23S rRNA + S-adenosyl-L-methionine = 2'-O-methylcytidine(2498) in 23S rRNA + S-adenosyl-L-homocysteine + H(+). In terms of biological role, catalyzes the 2'-O-methylation at nucleotide C2498 in 23S rRNA. This chain is Ribosomal RNA large subunit methyltransferase M, found in Yersinia enterocolitica serotype O:8 / biotype 1B (strain NCTC 13174 / 8081).